Here is a 95-residue protein sequence, read N- to C-terminus: Acylphosphatase (95 aa).

The Acylphosphatase-like domain occupies 7-94; the sequence is AALVRITGRV…EAPAGFRITR (88 aa). Active-site residues include R22 and N40. Positions 76–88 are enriched in low complexity; that stretch reads VASEEASSAEAPA. Residues 76 to 95 are disordered; that stretch reads VASEEASSAEAPAGFRITRG.

It belongs to the acylphosphatase family.

It carries out the reaction an acyl phosphate + H2O = a carboxylate + phosphate + H(+). This Rhizobium meliloti (strain 1021) (Ensifer meliloti) protein is Acylphosphatase (acyP).